The chain runs to 224 residues: MLVNEISENEKPREKLQNYGIEALSTSELVALIIETGTKTESVLTIANRIMMKFKHIAEMQYASIEEFQLVNGIGIAKASKIMAAVELGKRISLVTEQKEIVIRCPEDAVKLVMPELAFLFQEHFHCIFLNTKNQVIYRQTIFVGGLNASIVHPREVFRLALRKSSASIMCFHNHPSGDPAPSSEDLLVTKRLAEAGNIVGITLLDHIIIGKNKYISLKEKGYF.

In terms of domain architecture, MPN spans valine 102–phenylalanine 224. Zn(2+) contacts are provided by histidine 173, histidine 175, and aspartate 186. The JAMM motif motif lies at histidine 173 to aspartate 186.

Belongs to the UPF0758 family.

The chain is UPF0758 protein lin1584 from Listeria innocua serovar 6a (strain ATCC BAA-680 / CLIP 11262).